Here is a 451-residue protein sequence, read N- to C-terminus: MRECISIHVGQAGVQMGNSCWELYCLEHGIQPDGQMPSDKTVGVCNDSFNTFFTETGSGKHVPRAVFVDLEPSVIDEVRSGIYRQLFHPEQLISGKEDAANNYARGHYTIGKEYVDIVLDRIRKLADQCTGLQGFLIFRSFGGGTGSGFASLLMERLSVEYGKKSKLEIAIYPAPQSATSVVEPYNSILTTHTTLEHSDCCFMVDNEAIFDICQRNLDVSRPTYTNLNRLIGQIVSSITASLRFEGALNVDLTEFQTNLVPYPRIHFPLTTYSPIISAEKAYHEQLSVGEITSACFEPANQMVKCDPRHGKYMACCLLYRGDVVPKDVTASIANVKTKRTIQFVDWCPTGFKVGINYQPPTVVPGADLAKVSRAVCMLSNTTAIAEAWARLDHKVDLMYAKRAFVHWYVGEGMEERQFSEAREDLATLEKDYEEVGIDTADGEDDEEANDY.

Residue Q11 coordinates GTP. K40 is subject to N6-acetyllysine. Positions 71, 140, 144, 145, 179, 206, and 228 each coordinate GTP. E71 provides a ligand contact to Mg(2+). The active site involves E254. A disordered region spans residues 432 to 451 (YEEVGIDTADGEDDEEANDY).

The protein belongs to the tubulin family. As to quaternary structure, dimer of alpha and beta chains. A typical microtubule is a hollow water-filled tube with an outer diameter of 25 nm and an inner diameter of 15 nM. Alpha-beta heterodimers associate head-to-tail to form protofilaments running lengthwise along the microtubule wall with the beta-tubulin subunit facing the microtubule plus end conferring a structural polarity. Microtubules usually have 13 protofilaments but different protofilament numbers can be found in some organisms and specialized cells. Requires Mg(2+) as cofactor. Undergoes a tyrosination/detyrosination cycle, the cyclic removal and re-addition of a C-terminal tyrosine residue by the enzymes tubulin tyrosine carboxypeptidase (TTCP) and tubulin tyrosine ligase (TTL), respectively. In terms of processing, acetylation of alpha chains at Lys-40 stabilizes microtubules and affects affinity and processivity of microtubule motors. This modification has a role in multiple cellular functions, ranging from cell motility, cell cycle progression or cell differentiation to intracellular trafficking and signaling.

It is found in the cytoplasm. Its subcellular location is the cytoskeleton. It catalyses the reaction GTP + H2O = GDP + phosphate + H(+). Tubulin is the major constituent of microtubules, a cylinder consisting of laterally associated linear protofilaments composed of alpha- and beta-tubulin heterodimers. Microtubules grow by the addition of GTP-tubulin dimers to the microtubule end, where a stabilizing cap forms. Below the cap, tubulin dimers are in GDP-bound state, owing to GTPase activity of alpha-tubulin. The chain is Tubulin alpha-2 chain from Homarus americanus (American lobster).